The primary structure comprises 149 residues: Stathmin (149 aa).

Position 2 is an N-acetylalanine (alanine 2). Serine 4 carries the phosphoserine modification. The SLD domain maps to 4-145 (SDIQVKELEK…NKESKDPADE (142 aa)). The residue at position 9 (lysine 9) is an N6-acetyllysine. Serine 16 bears the Phosphoserine mark. Phosphoserine; by CDK1, MAPK1 and MAPK3 is present on serine 25. An N6-methyllysine modification is found at lysine 29. Position 31 is a phosphoserine (serine 31). A Phosphoserine; by CDK1, MAPK1 and MAPK3 modification is found at serine 38. A coiled-coil region spans residues 41 to 140 (KKKDLSLEEI…EEVRKNKESK (100 aa)). Serine 63 bears the Phosphoserine; by PKA mark. An N6-acetyllysine mark is found at lysine 100 and lysine 119. Positions 121–143 (ERLREKDKHIEEVRKNKESKDPA) are enriched in basic and acidic residues. The tract at residues 121–149 (ERLREKDKHIEEVRKNKESKDPADETEAD) is disordered.

This sequence belongs to the stathmin family. In terms of assembly, binds to two alpha/beta-tubulin heterodimers. Interacts with KIST. Post-translationally, many different phosphorylated forms are observed depending on specific combinations among the sites which can be phosphorylated. MAPK is responsible for the phosphorylation of stathmin in response to NGF. Phosphorylation at Ser-16 seems to be required for neuron polarization.

It localises to the cytoplasm. Its subcellular location is the cytoskeleton. In terms of biological role, involved in the regulation of the microtubule (MT) filament system by destabilizing microtubules. Prevents assembly and promotes disassembly of microtubules. Its phosphorylation at Ser-16 may be required for axon formation during neurogenesis. Involved in the control of the learned and innate fear. This chain is Stathmin (STMN1), found in Bos taurus (Bovine).